We begin with the raw amino-acid sequence, 602 residues long: Protein SHORT-ROOT 1 (602 aa).

The segment covering 12 to 55 (AASEQQQQQQQSASYNSRSTTSSGSRSSSHQTNASYSYYHHSSN) has biased composition (low complexity). Disordered stretches follow at residues 12–69 (AASE…YYYG), 101–145 (DFSS…TAAG), and 165–185 (DFSS…AVGG). The segment covering 56–68 (SGGGGGGGGGYYY) has biased composition (gly residues). Residues 122–145 (PPASSTPTGTAPTPPLSTSSTAAG) are compositionally biased toward low complexity. Gly residues predominate over residues 173–185 (SGGGTASSGAVGG). A GRAS domain is found at 183–601 (VGGGGGGRWA…QPLVWASAWR (419 aa)). Residues 190 to 253 (RWASQLLLEC…LTASGPRTLR (64 aa)) are leucine repeat I (LRI). A VHIID region spans residues 272-349 (ALRFQELSPW…PHLSITTVVS (78 aa)). A VHIID motif is present at residues 311 to 315 (FHILD). The interval 365-401 (EIGQRMEKFARLMGVPFRFRAVHHSGDLAELDLDALD) is leucine repeat II (LRII). The tract at residues 411-517 (LAVNCVNSLR…ERGAGRAIVD (107 aa)) is PFYRE. An SAW region spans residues 520 to 601 (SCPASESMER…QPLVWASAWR (82 aa)).

It belongs to the GRAS family. Interacts with SCR1. Interacts with SMOS1. As to expression, expressed in leaves and roots. Detected in the stele, the endodermis and part of the cortex.

The protein resides in the nucleus. Functionally, transcription factor required for the asymmetric cell division involved in radial pattern formation in roots. Essential for both cell division and cell specification. In Oryza sativa subsp. japonica (Rice), this protein is Protein SHORT-ROOT 1.